The chain runs to 265 residues: Dimethylsulfide dehydrogenase subunit gamma (265 aa).

The N-terminal stretch at methionine 1–alanine 25 is a signal peptide. Positions 81 and 147 each coordinate heme b.

In terms of assembly, heterotrimer of alpha, beta and gamma subunits. Heme b serves as cofactor.

The protein localises to the periplasm. Its function is as follows. May transfer electrons to the iron-sulfur centers of DdhB. The polypeptide is Dimethylsulfide dehydrogenase subunit gamma (ddhC) (Rhodovulum sulfidophilum (Rhodobacter sulfidophilus)).